The primary structure comprises 397 residues: Erythromycin C-12 hydroxylase (397 aa).

A substrate-binding site is contributed by 74–75 (HE). Heme contacts are provided by His81 and Arg85. Residue Gln278 coordinates substrate. Arg279 lines the heme pocket. The segment covering 307–322 (RDSDAHDDPDRFDPSR) has biased composition (basic and acidic residues). The interval 307–326 (RDSDAHDDPDRFDPSRKSGG) is disordered. Residues His337 and Cys339 each contribute to the heme site.

It belongs to the cytochrome P450 family. In terms of assembly, monomer. Requires heme b as cofactor.

The enzyme catalyses erythromycin D + NADPH + O2 + H(+) = erythromycin C + NADP(+) + H2O. Its pathway is antibiotic biosynthesis; erythromycin biosynthesis. Responsible for the C-12 hydroxylation of the macrolactone ring of erythromycin. Thus, EryK catalyzes the hydroxylation of erythromycin D (ErD) at the C-12 position to produce erythromycin C (ErC). Erythromycin B (ErB) is not a substrate for this enzyme. This chain is Erythromycin C-12 hydroxylase (eryK), found in Saccharopolyspora erythraea (strain ATCC 11635 / DSM 40517 / JCM 4748 / NBRC 13426 / NCIMB 8594 / NRRL 2338).